A 226-amino-acid polypeptide reads, in one-letter code: Uracil-DNA glycosylase (226 aa).

Asp-64 (proton acceptor) is an active-site residue.

It belongs to the uracil-DNA glycosylase (UDG) superfamily. UNG family.

The protein resides in the cytoplasm. The enzyme catalyses Hydrolyzes single-stranded DNA or mismatched double-stranded DNA and polynucleotides, releasing free uracil.. In terms of biological role, excises uracil residues from the DNA which can arise as a result of misincorporation of dUMP residues by DNA polymerase or due to deamination of cytosine. The polypeptide is Uracil-DNA glycosylase (Vibrio parahaemolyticus serotype O3:K6 (strain RIMD 2210633)).